A 294-amino-acid polypeptide reads, in one-letter code: Probable endonuclease 4 (294 aa).

Zn(2+) is bound by residues His-78, His-118, Glu-157, Asp-191, His-194, His-228, Asp-241, His-243, and Glu-273.

The protein belongs to the AP endonuclease 2 family. Zn(2+) is required as a cofactor.

The catalysed reaction is Endonucleolytic cleavage to 5'-phosphooligonucleotide end-products.. Endonuclease IV plays a role in DNA repair. It cleaves phosphodiester bonds at apurinic or apyrimidinic (AP) sites, generating a 3'-hydroxyl group and a 5'-terminal sugar phosphate. The protein is Probable endonuclease 4 of Streptomyces coelicolor (strain ATCC BAA-471 / A3(2) / M145).